A 363-amino-acid polypeptide reads, in one-letter code: Fructose-bisphosphate aldolase 2 (363 aa).

Residue Ser61 participates in D-glyceraldehyde 3-phosphate binding. The active-site Proton donor is Asp109. 4 residues coordinate Zn(2+): His110, Asp144, Glu174, and His226. Residue Gly227 participates in dihydroxyacetone phosphate binding. His264 contributes to the Zn(2+) binding site. 265 to 267 (GGS) is a binding site for dihydroxyacetone phosphate.

Belongs to the class II fructose-bisphosphate aldolase family. As to quaternary structure, homodimer. The cofactor is Zn(2+).

The enzyme catalyses beta-D-fructose 1,6-bisphosphate = D-glyceraldehyde 3-phosphate + dihydroxyacetone phosphate. It participates in carbohydrate degradation; glycolysis; D-glyceraldehyde 3-phosphate and glycerone phosphate from D-glucose: step 4/4. In terms of biological role, catalyzes the aldol condensation of dihydroxyacetone phosphate (DHAP or glycerone-phosphate) with glyceraldehyde 3-phosphate (G3P) to form fructose 1,6-bisphosphate (FBP) in gluconeogenesis and the reverse reaction in glycolysis. This Paracoccidioides lutzii (strain ATCC MYA-826 / Pb01) (Paracoccidioides brasiliensis) protein is Fructose-bisphosphate aldolase 2 (FBA2).